The sequence spans 302 residues: 33 kDa chaperonin (302 aa).

Disulfide bonds link Cys234–Cys236 and Cys267–Cys270.

The protein belongs to the HSP33 family. In terms of processing, under oxidizing conditions two disulfide bonds are formed involving the reactive cysteines. Under reducing conditions zinc is bound to the reactive cysteines and the protein is inactive.

It localises to the cytoplasm. Redox regulated molecular chaperone. Protects both thermally unfolding and oxidatively damaged proteins from irreversible aggregation. Plays an important role in the bacterial defense system toward oxidative stress. This is 33 kDa chaperonin from Neisseria meningitidis serogroup A / serotype 4A (strain DSM 15465 / Z2491).